A 501-amino-acid polypeptide reads, in one-letter code: MSKMGSLMLSRARCLLELRSALFFVKRESQDINNVRQSLGVYGRSFMTSSRMDKPSMSNKPREQMYGLGNMTAVQEPIPENSLKTVTLDQAQTAASTVTGLHPIYMDFQATSPLDYRVLDSMLPFFTGIYGNPHSRTHAYGWEAEKAVENARQEIASVINADPREIIFTSGATESNNAILKGVARFYKSRKKHLVSVQTEHKCVLDSLRALQEEGFEVTFLPVQTNGLINLDELRDAIRPDTVCVSVMAVNNEIGVCQPLEEIGKICRQKKVFFHSDAAQGYGKIDIDVNRMNIDLMSISAHKIYGPKGIGAAYVRRRPRVRLEPLISGGGQERGLRSGTLAPSQVVGFGTAARICKEEMKYDYAHISKLSQRLIDGLLAIPYTSLNGDPKSRYPGCVNISFNYVEGESLLMGLKNIALSSGSACTSASLEPSYVLRAIGQSDENAHSSIRFGIGRFTTEAEIDYAIENVSRQVSFLRNMSPLWDLVQEGVDLSTIEWSQH.

Pyridoxal 5'-phosphate contacts are provided by residues Ala-172–Thr-173, Asn-252, Gln-280, and Ser-300–His-302. Residue Lys-303 is modified to N6-(pyridoxal phosphate)lysine. Pyridoxal 5'-phosphate is bound at residue Thr-340. The active-site Cysteine persulfide intermediate is Cys-425. Residue Cys-425 participates in [2Fe-2S] cluster binding.

It belongs to the class-V pyridoxal-phosphate-dependent aminotransferase family. NifS/IscS subfamily. It depends on pyridoxal 5'-phosphate as a cofactor.

The protein resides in the mitochondrion. It carries out the reaction (sulfur carrier)-H + L-cysteine = (sulfur carrier)-SH + L-alanine. In terms of biological role, catalyzes the removal of elemental sulfur from cysteine to produce alanine. It supplies the inorganic sulfur for iron-sulfur (Fe-S) clusters. Plays a role in both tRNA-processing and mitochondrial metabolism. Involved in the 2-thio-modification of both 5-carboxymethylaminomethyl-2-thiouridine in mitochondrial tRNAs and 5-methoxycarbonylmethyl-2-thiouridine (mcm5s2U) in cytoplasmic tRNAs. The polypeptide is Probable cysteine desulfurase, mitochondrial (Schizosaccharomyces pombe (strain 972 / ATCC 24843) (Fission yeast)).